The primary structure comprises 444 residues: tRNA modification GTPase MnmE (444 aa).

Arg-24, Glu-81, and Lys-121 together coordinate (6S)-5-formyl-5,6,7,8-tetrahydrofolate. The 151-residue stretch at 218–368 (GLTVVIAGPP…LLDALVGFAR (151 aa)) folds into the TrmE-type G domain. GTP is bound by residues 228 to 233 (NAGKST), 247 to 253 (SPQAGTT), 272 to 275 (DTAG), and 349 to 351 (SAR). Residues Ser-232 and Thr-253 each contribute to the Mg(2+) site. Lys-444 serves as a coordination point for (6S)-5-formyl-5,6,7,8-tetrahydrofolate.

The protein belongs to the TRAFAC class TrmE-Era-EngA-EngB-Septin-like GTPase superfamily. TrmE GTPase family. Homodimer. Heterotetramer of two MnmE and two MnmG subunits. K(+) is required as a cofactor.

The protein resides in the cytoplasm. In terms of biological role, exhibits a very high intrinsic GTPase hydrolysis rate. Involved in the addition of a carboxymethylaminomethyl (cmnm) group at the wobble position (U34) of certain tRNAs, forming tRNA-cmnm(5)s(2)U34. This chain is tRNA modification GTPase MnmE, found in Bradyrhizobium sp. (strain ORS 278).